Reading from the N-terminus, the 152-residue chain is Endoribonuclease YbeY (152 aa).

The Zn(2+) site is built by His118, His122, and His128.

The protein belongs to the endoribonuclease YbeY family. Requires Zn(2+) as cofactor.

It localises to the cytoplasm. Its function is as follows. Single strand-specific metallo-endoribonuclease involved in late-stage 70S ribosome quality control and in maturation of the 3' terminus of the 16S rRNA. The polypeptide is Endoribonuclease YbeY (Lacticaseibacillus casei (strain BL23) (Lactobacillus casei)).